A 692-amino-acid polypeptide reads, in one-letter code: Elongation factor G (692 aa).

The 275-residue stretch at 8-282 (KDYRNIGIMA…AVVDYLPSPL (275 aa)) folds into the tr-type G domain. Residues 17–24 (AHIDAGKT), 81–85 (DTPGH), and 135–138 (NKMD) each bind GTP.

The protein belongs to the TRAFAC class translation factor GTPase superfamily. Classic translation factor GTPase family. EF-G/EF-2 subfamily.

It localises to the cytoplasm. In terms of biological role, catalyzes the GTP-dependent ribosomal translocation step during translation elongation. During this step, the ribosome changes from the pre-translocational (PRE) to the post-translocational (POST) state as the newly formed A-site-bound peptidyl-tRNA and P-site-bound deacylated tRNA move to the P and E sites, respectively. Catalyzes the coordinated movement of the two tRNA molecules, the mRNA and conformational changes in the ribosome. The sequence is that of Elongation factor G (fusA) from Mycoplasmopsis pulmonis (strain UAB CTIP) (Mycoplasma pulmonis).